Consider the following 381-residue polypeptide: Anti-sigma-I factor RsgI (381 aa).

Residues 1 to 63 (MRRGIIVEKN…FDFFKLRPFK (63 aa)) lie on the Cytoplasmic side of the membrane. The 49-residue stretch at 2 to 50 (RRGIIVEKNKKFVTLLTPDGQFLKAKNDRHSYEIGEEIMLPSETRMGRR) folds into the RsgI N-terminal anti-sigma domain. Residues 64–84 (MGIFTMTAIMLFIFIVLPVFS) traverse the membrane as a helical segment. At 85 to 381 (NNKAYAYMTI…NEDSPSAPGE (297 aa)) the chain is on the extracellular side. Residues 198–381 (SDMQTREKAK…NEDSPSAPGE (184 aa)) are disordered. Composition is skewed to basic and acidic residues over residues 200-210 (MQTREKAKKEG), 219-244 (SNEK…QKSD), 273-321 (GDQK…DKGN), and 349-359 (SRRDNASDRRN).

In terms of assembly, interacts (via RsgI N-terminal anti-sigma domain) with SigI.

The protein localises to the cell membrane. Functionally, anti-sigma factor for SigI. Negatively regulates SigI activity through direct interaction. This chain is Anti-sigma-I factor RsgI, found in Bacillus subtilis (strain 168).